The chain runs to 285 residues: Nucleotide-binding protein Pmen_0867 (285 aa).

Position 8 to 15 (8 to 15 (GRSGSGKS)) interacts with ATP. Residue 60–63 (DARN) coordinates GTP.

It belongs to the RapZ-like family.

Displays ATPase and GTPase activities. This is Nucleotide-binding protein Pmen_0867 from Ectopseudomonas mendocina (strain ymp) (Pseudomonas mendocina).